A 298-amino-acid chain; its full sequence is Ethanolamine ammonia-lyase small subunit (298 aa).

Val-210, Glu-231, and Cys-261 together coordinate adenosylcob(III)alamin.

It belongs to the EutC family. The basic unit is a heterodimer which dimerizes to form tetramers. The heterotetramers trimerize; 6 large subunits form a core ring with 6 small subunits projecting outwards. Adenosylcob(III)alamin serves as cofactor.

The protein localises to the bacterial microcompartment. The catalysed reaction is ethanolamine = acetaldehyde + NH4(+). It participates in amine and polyamine degradation; ethanolamine degradation. Its function is as follows. Catalyzes the deamination of various vicinal amino-alcohols to oxo compounds. Allows this organism to utilize ethanolamine as the sole source of nitrogen and carbon in the presence of external vitamin B12. This chain is Ethanolamine ammonia-lyase small subunit, found in Salmonella agona (strain SL483).